Here is a 256-residue protein sequence, read N- to C-terminus: Type III pantothenate kinase (256 aa).

D6–K13 lines the ATP pocket. Substrate is bound by residues Y90 and G97–R100. D99 acts as the Proton acceptor in catalysis. T123 serves as a coordination point for ATP. Position 187 (T187) interacts with substrate.

It belongs to the type III pantothenate kinase family. In terms of assembly, homodimer. NH4(+) serves as cofactor. K(+) is required as a cofactor.

The protein resides in the cytoplasm. The catalysed reaction is (R)-pantothenate + ATP = (R)-4'-phosphopantothenate + ADP + H(+). Its pathway is cofactor biosynthesis; coenzyme A biosynthesis; CoA from (R)-pantothenate: step 1/5. Catalyzes the phosphorylation of pantothenate (Pan), the first step in CoA biosynthesis. This Burkholderia mallei (strain NCTC 10247) protein is Type III pantothenate kinase.